We begin with the raw amino-acid sequence, 445 residues long: Histamine H3 receptor (445 aa).

Residues Met-1–Ala-39 lie on the Extracellular side of the membrane. A glycan (N-linked (GlcNAc...) asparagine) is linked at Asn-11. The helical transmembrane segment at Leu-40–Val-60 threads the bilayer. Residues Ala-61–Asn-70 are Cytoplasmic-facing. A helical membrane pass occupies residues Phe-71–Tyr-91. Residues Val-92–Lys-108 are Extracellular-facing. Cys-107 and Cys-188 are disulfide-bonded. The helical transmembrane segment at Leu-109–Ser-129 threads the bilayer. The Cytoplasmic portion of the chain corresponds to Tyr-130 to Met-156. The chain crosses the membrane as a helical span at residues Ala-157–Leu-177. Residues Ser-178 to Trp-196 lie on the Extracellular side of the membrane. Residues Tyr-197–Phe-217 form a helical membrane-spanning segment. The Cytoplasmic portion of the chain corresponds to Asn-218–Ser-359. 2 disordered regions span residues Asp-234–Trp-259 and His-273–Arg-336. Residues Pro-241 to Pro-256 are compositionally biased toward pro residues. A compositionally biased stretch (gly residues) spans Ala-289–Ala-299. Residues Ala-300–Arg-312 are compositionally biased toward low complexity. The chain crosses the membrane as a helical span at residues Leu-360–Ile-380. The Extracellular segment spans residues Arg-381 to Thr-396. The chain crosses the membrane as a helical span at residues Ser-397–Tyr-417. Residues Ser-418 to Lys-445 are Cytoplasmic-facing. A Phosphoserine modification is found at Ser-439.

Belongs to the G-protein coupled receptor 1 family.

It is found in the cell membrane. Functionally, the H3 subclass of histamine receptors could mediate the histamine signals in CNS and peripheral nervous system. Signals through the inhibition of adenylate cyclase and displays high constitutive activity (spontaneous activity in the absence of agonist). The protein is Histamine H3 receptor (Hrh3) of Mus musculus (Mouse).